The following is a 138-amino-acid chain: Ribulose bisphosphate carboxylase small subunit (138 aa).

It belongs to the RuBisCO small chain family. In terms of assembly, heterohexadecamer of 8 large and 8 small subunits.

The protein localises to the plastid. The protein resides in the chloroplast. RuBisCO catalyzes two reactions: the carboxylation of D-ribulose 1,5-bisphosphate, the primary event in carbon dioxide fixation, as well as the oxidative fragmentation of the pentose substrate in the photorespiration process. Both reactions occur simultaneously and in competition at the same active site. Although the small subunit is not catalytic it is essential for maximal activity. This Pyropia dentata (Red alga) protein is Ribulose bisphosphate carboxylase small subunit.